Here is a 160-residue protein sequence, read N- to C-terminus: S-ribosylhomocysteine lyase (160 aa).

Residues H57, H61, and C127 each contribute to the Fe cation site.

The protein belongs to the LuxS family. As to quaternary structure, homodimer. Fe cation is required as a cofactor.

The catalysed reaction is S-(5-deoxy-D-ribos-5-yl)-L-homocysteine = (S)-4,5-dihydroxypentane-2,3-dione + L-homocysteine. Involved in the synthesis of autoinducer 2 (AI-2) which is secreted by bacteria and is used to communicate both the cell density and the metabolic potential of the environment. The regulation of gene expression in response to changes in cell density is called quorum sensing. Catalyzes the transformation of S-ribosylhomocysteine (RHC) to homocysteine (HC) and 4,5-dihydroxy-2,3-pentadione (DPD). The protein is S-ribosylhomocysteine lyase of Streptococcus thermophilus (strain CNRZ 1066).